We begin with the raw amino-acid sequence, 422 residues long: Phospho-N-acetylmuramoyl-pentapeptide-transferase (422 aa).

A run of 9 helical transmembrane segments spans residues 28 to 48 (LMAI…FINL), 71 to 91 (VGVP…PCLL), 95 to 115 (LHNI…SLGF), 136 to 156 (IIGQ…SPDV), 211 to 231 (AGWI…SNGA), 246 to 266 (AIIG…EFAG), 279 to 299 (LVIF…YNAY), 313 to 333 (IGGI…IPIL), and 399 to 419 (KITV…IITL).

This sequence belongs to the glycosyltransferase 4 family. MraY subfamily. It depends on Mg(2+) as a cofactor.

It is found in the cell inner membrane. The catalysed reaction is UDP-N-acetyl-alpha-D-muramoyl-L-alanyl-gamma-D-glutamyl-meso-2,6-diaminopimeloyl-D-alanyl-D-alanine + di-trans,octa-cis-undecaprenyl phosphate = di-trans,octa-cis-undecaprenyl diphospho-N-acetyl-alpha-D-muramoyl-L-alanyl-D-glutamyl-meso-2,6-diaminopimeloyl-D-alanyl-D-alanine + UMP. It participates in cell wall biogenesis; peptidoglycan biosynthesis. Functionally, catalyzes the initial step of the lipid cycle reactions in the biosynthesis of the cell wall peptidoglycan: transfers peptidoglycan precursor phospho-MurNAc-pentapeptide from UDP-MurNAc-pentapeptide onto the lipid carrier undecaprenyl phosphate, yielding undecaprenyl-pyrophosphoryl-MurNAc-pentapeptide, known as lipid I. This chain is Phospho-N-acetylmuramoyl-pentapeptide-transferase, found in Bacteroides fragilis (strain ATCC 25285 / DSM 2151 / CCUG 4856 / JCM 11019 / LMG 10263 / NCTC 9343 / Onslow / VPI 2553 / EN-2).